We begin with the raw amino-acid sequence, 644 residues long: Exoribonuclease 2 (644 aa).

The region spanning 190–516 (REDLTALDFI…INHRLLKALI (327 aa)) is the RNB domain. Positions 562 to 644 (DSRFAAEIID…ENRSVIARPV (83 aa)) constitute an S1 motif domain.

Belongs to the RNR ribonuclease family. RNase II subfamily.

It localises to the cytoplasm. The catalysed reaction is Exonucleolytic cleavage in the 3'- to 5'-direction to yield nucleoside 5'-phosphates.. Its function is as follows. Involved in mRNA degradation. Hydrolyzes single-stranded polyribonucleotides processively in the 3' to 5' direction. The polypeptide is Exoribonuclease 2 (Sodalis glossinidius (strain morsitans)).